The following is a 92-amino-acid chain: Small ribosomal subunit protein uS19 (92 aa).

This sequence belongs to the universal ribosomal protein uS19 family.

Functionally, protein S19 forms a complex with S13 that binds strongly to the 16S ribosomal RNA. The polypeptide is Small ribosomal subunit protein uS19 (Neisseria gonorrhoeae (strain ATCC 700825 / FA 1090)).